The sequence spans 269 residues: 2-dehydro-3-deoxyphosphooctonate aldolase (269 aa).

Belongs to the KdsA family.

It localises to the cytoplasm. The enzyme catalyses D-arabinose 5-phosphate + phosphoenolpyruvate + H2O = 3-deoxy-alpha-D-manno-2-octulosonate-8-phosphate + phosphate. It functions in the pathway carbohydrate biosynthesis; 3-deoxy-D-manno-octulosonate biosynthesis; 3-deoxy-D-manno-octulosonate from D-ribulose 5-phosphate: step 2/3. The protein operates within bacterial outer membrane biogenesis; lipopolysaccharide biosynthesis. This chain is 2-dehydro-3-deoxyphosphooctonate aldolase, found in Chlamydia trachomatis serovar A (strain ATCC VR-571B / DSM 19440 / HAR-13).